We begin with the raw amino-acid sequence, 203 residues long: ADP-ribosylation factor-like protein 6-interacting protein 1 (203 aa).

The Cytoplasmic portion of the chain corresponds to 1-41 (MAEGDNRSSNLLAAETASLEEQLQGWGEVMLMADKVLRWER). The chain crosses the membrane as a helical span at residues 42–62 (AWFPPAIMGVVSLVFLIIYYL). At 63–65 (DPS) the chain is on the lumenal side. The helical transmembrane segment at 66 to 86 (VLSGVSCFVMFLCLADYLVPI) threads the bilayer. Over 87-133 (LAPRIFGSNKWTTEQQQRFHEICSNLVKTRRRAVGWWKRLFTLKEEK) the chain is Cytoplasmic. The helical transmembrane segment at 134–175 (PKMYFMTMIVSLAAVAWVGQQVHNLLLTYLIVTSLLLLPGLN) threads the bilayer. The Lumenal portion of the chain corresponds to 176-203 (QHGIISKYIGMAKREINKLLKQKEKKNE).

Belongs to the ARL6ip family. Homooligomer. Heterodimer with ARL6IP5. Interacts with ATL1, TMEM33 and ARL6.

It localises to the endomembrane system. The protein resides in the endoplasmic reticulum membrane. It is found in the endoplasmic reticulum. Functionally, positively regulates SLC1A1/EAAC1-mediated glutamate transport by increasing its affinity for glutamate in a PKC activity-dependent manner. Promotes the catalytic efficiency of SLC1A1/EAAC1 probably by reducing its interaction with ARL6IP5, a negative regulator of SLC1A1/EAAC1-mediated glutamate transport. Plays a role in the formation and stabilization of endoplasmic reticulum tubules. Negatively regulates apoptosis, possibly by modulating the activity of caspase-9 (CASP9). Inhibits cleavage of CASP9-dependent substrates and downstream markers of apoptosis but not CASP9 itself. May be involved in protein transport, membrane trafficking, or cell signaling during hematopoietic maturation. The chain is ADP-ribosylation factor-like protein 6-interacting protein 1 (ARL6IP1) from Pongo abelii (Sumatran orangutan).